We begin with the raw amino-acid sequence, 270 residues long: L-cystine-binding protein TcyK (270 aa).

A signal peptide spans 1–20 (MKTKTAFMAILFSLITVLSA). A lipid anchor (N-palmitoyl cysteine) is attached at cysteine 21. A lipid anchor (S-diacylglycerol cysteine) is attached at cysteine 21.

Belongs to the bacterial solute-binding protein 3 family. In terms of assembly, the complex is composed of two ATP-binding proteins (TcyN), two transmembrane proteins (TcyL and TcyM) and two solute-binding proteins (TcyJ and TcyK).

Its subcellular location is the cell membrane. Functionally, part of the ABC transporter complex TcyJKLMN involved in L-cystine import. Is also involved in cystathionine, djenkolate, and S-methylcysteine transport. The protein is L-cystine-binding protein TcyK (tcyK) of Bacillus subtilis (strain 168).